The chain runs to 173 residues: C-phycocyanin beta subunit (173 aa).

An N4-methylasparagine modification is found at asparagine 73. 2 residues coordinate (2R,3E)-phycocyanobilin: cysteine 83 and cysteine 154.

The protein belongs to the phycobiliprotein family. Heterodimer of an alpha and a beta subunit. Part of 2 PBS rod complexes, the conventional PBS rod and a photosystem I-specific CpcL-PBS rod. Contains two covalently linked bilin chromophores.

The protein localises to the cellular thylakoid membrane. Light-harvesting photosynthetic bile pigment-protein from the phycobiliprotein complex (phycobilisome, PBS). Phycocyanin is the major phycobiliprotein in the PBS rod. In Nostoc sp. (strain PCC 7120 / SAG 25.82 / UTEX 2576), this protein is C-phycocyanin beta subunit (cpcB).